A 412-amino-acid chain; its full sequence is Putative competence-damage inducible protein (412 aa).

This sequence belongs to the CinA family.

This is Putative competence-damage inducible protein from Clostridium perfringens (strain 13 / Type A).